Consider the following 413-residue polypeptide: 5'-deoxyadenosine deaminase (413 aa).

Histidine 57 and histidine 59 together coordinate Zn(2+). Substrate contacts are provided by glutamate 86 and histidine 171. Histidine 198 is a Zn(2+) binding site. Substrate is bound by residues glutamate 201 and aspartate 286. Zn(2+) is bound at residue aspartate 286.

Belongs to the metallo-dependent hydrolases superfamily. MTA/SAH deaminase family. In terms of assembly, homotetramer. The cofactor is Zn(2+).

The enzyme catalyses 5'-deoxyadenosine + H2O + H(+) = 5'-deoxyinosine + NH4(+). It catalyses the reaction S-adenosyl-L-homocysteine + H2O + H(+) = S-inosyl-L-homocysteine + NH4(+). It carries out the reaction S-methyl-5'-thioadenosine + H2O + H(+) = S-methyl-5'-thioinosine + NH4(+). The catalysed reaction is adenosine + H2O + H(+) = inosine + NH4(+). It functions in the pathway amino-acid biosynthesis; S-adenosyl-L-methionine biosynthesis. Its function is as follows. Catalyzes the deamination of three SAM-derived enzymatic products, namely 5'-deoxyadenosine, S-adenosyl-L-homocysteine, and 5'-methylthioadenosine, to produce the inosine analogs. Can also deaminate adenosine. The preferred substrate for this enzyme is 5'-deoxyadenosine, but all these substrates are efficiently deaminated. Likely functions in a S-adenosyl-L-methionine (SAM) recycling pathway from S-adenosyl-L-homocysteine (SAH) produced from SAM-dependent methylation reactions. May also be involved in the recycling of 5'-deoxyadenosine, whereupon the 5'-deoxyribose moiety of 5'-deoxyinosine is further metabolized to deoxyhexoses used for the biosynthesis of aromatic amino acids in methanogens. This is 5'-deoxyadenosine deaminase from Methanothrix thermoacetophila (strain DSM 6194 / JCM 14653 / NBRC 101360 / PT) (Methanosaeta thermophila).